We begin with the raw amino-acid sequence, 310 residues long: Zinc finger CCCH domain-containing protein 14 (310 aa).

A disordered region spans residues 56-75 (ESLSPSPPSSSSPPSRVDTT). The stretch at 84–129 (KLILEYDELNEHYELCLNRLQSLMTELDSLRHENDSLRFENSDLLK) forms a coiled coil. Positions 155 to 167 (QISDSRSAKRNNQ) are enriched in basic and acidic residues. A disordered region spans residues 155-174 (QISDSRSAKRNNQERNSLPK). C3H1-type zinc fingers lie at residues 232–260 (MMKT…HGID) and 270–298 (RYKT…HSLT).

Highly expressed in secondary cell wall-forming tissues and the xylem cells of roots. Expressed predominantly in inflorescence stems, flowers and siliques. Highly expressed in the basal portion of stems, where cells are undergoing secondary cell wall thickening.

Functions probably as a transcriptional factor that activates genes involved in secondary cell wall biosynthesis. May play a role in both transcriptional and post-transcriptional regulation. Binds to ssDNA, dsDNA, and ribohomopolymers in vitro. Maybe involved in post-transcriptional regulation of its target genes. Targets RNA of a polygalacturonase, a well-known cell wall modifying gene. Functions redudantly with C3H15 to regulate secondary cell wall formation. C3H14 and C3H15 have overlapping roles in the regulation of secondary cell wall formation and anther development. C3H14 may contribute more to secondary cell wall thickening while C3H15 could be more important in anther development. May regulate at both the transcriptional and post-transcriptional levels the expression of many genes involved in various biological processes, particularly those associated with cell wall metabolism and pollen development. The sequence is that of Zinc finger CCCH domain-containing protein 14 from Arabidopsis thaliana (Mouse-ear cress).